The primary structure comprises 101 residues: NAD(P)H-quinone oxidoreductase subunit 4L, chloroplastic (101 aa).

3 helical membrane passes run 2-22, 30-52, and 61-81; these read ILEH…YGLI, ALMC…SDFF, and IFSI…LAIV.

The protein belongs to the complex I subunit 4L family. NDH is composed of at least 16 different subunits, 5 of which are encoded in the nucleus.

It is found in the plastid. Its subcellular location is the chloroplast thylakoid membrane. It catalyses the reaction a plastoquinone + NADH + (n+1) H(+)(in) = a plastoquinol + NAD(+) + n H(+)(out). The enzyme catalyses a plastoquinone + NADPH + (n+1) H(+)(in) = a plastoquinol + NADP(+) + n H(+)(out). Functionally, NDH shuttles electrons from NAD(P)H:plastoquinone, via FMN and iron-sulfur (Fe-S) centers, to quinones in the photosynthetic chain and possibly in a chloroplast respiratory chain. The immediate electron acceptor for the enzyme in this species is believed to be plastoquinone. Couples the redox reaction to proton translocation, and thus conserves the redox energy in a proton gradient. In Oenothera glazioviana (Large-flowered evening primrose), this protein is NAD(P)H-quinone oxidoreductase subunit 4L, chloroplastic.